Here is a 160-residue protein sequence, read N- to C-terminus: V-type proton ATPase subunit c (160 aa).

Residues 1–8 (MTELCPVY) are Vacuolar-facing. Residues 9–31 (APFFGAIGCASAIIFTSLGAAYG) form a helical membrane-spanning segment. Over 32–53 (TAKSGVGICATCVLRPDLLFKN) the chain is Cytoplasmic. Residues 54-74 (IVPVIMAGIIAIYGLVVSVLV) traverse the membrane as a helical segment. At 75 to 90 (CYSLGQKQALYTGFIQ) the chain is on the vacuolar side. Residues 91-112 (LGAGLSVGLSGLAAGFAIGIVG) traverse the membrane as a helical segment. The Cytoplasmic portion of the chain corresponds to 113-124 (DAGVRGSSQQPR). The helical transmembrane segment at 125–150 (LFVGMILILIFAEVLGLYGLIVALLL) threads the bilayer. Residues 151 to 160 (NSRATQDVVC) are Vacuolar-facing.

The protein belongs to the V-ATPase proteolipid subunit family. As to quaternary structure, V-ATPase is a heteromultimeric enzyme composed of a peripheral catalytic V1 complex (components A to H) attached to an integral membrane V0 proton pore complex (components: a, c, c', c'', d, e, f and VOA1). The decameric c-ring forms the proton-conducting pore, and is composed of eight proteolipid subunits c, one subunit c' and one subunit c''.

Its subcellular location is the vacuole membrane. Functionally, proton-conducting pore forming subunit of the V0 complex of vacuolar(H+)-ATPase (V-ATPase), a multisubunit enzyme composed of a peripheral complex (V1) that hydrolyzes ATP and a membrane integral complex (V0) that translocates protons. V-ATPase is responsible for acidifying and maintaining the pH of intracellular compartments. The chain is V-type proton ATPase subunit c (VMA3) from Saccharomyces cerevisiae (strain ATCC 204508 / S288c) (Baker's yeast).